Reading from the N-terminus, the 294-residue chain is ATP synthase gamma chain (294 aa).

It belongs to the ATPase gamma chain family. As to quaternary structure, F-type ATPases have 2 components, CF(1) - the catalytic core - and CF(0) - the membrane proton channel. CF(1) has five subunits: alpha(3), beta(3), gamma(1), delta(1), epsilon(1). CF(0) has three main subunits: a, b and c.

It localises to the cell inner membrane. Functionally, produces ATP from ADP in the presence of a proton gradient across the membrane. The gamma chain is believed to be important in regulating ATPase activity and the flow of protons through the CF(0) complex. The sequence is that of ATP synthase gamma chain from Rhizobium etli (strain CIAT 652).